A 298-amino-acid polypeptide reads, in one-letter code: Multifunctional dioxygenase ausE (298 aa).

Substrate is bound by residues R72 and Q127. Fe cation is bound by residues H130 and D132. T167 serves as a coordination point for substrate. Fe cation is bound at residue H214. Residue R226 participates in substrate binding.

The protein belongs to the PhyH family. As to quaternary structure, homodimer. Requires Fe cation as cofactor.

It catalyses the reaction preaustinoid A1 + 2-oxoglutarate + O2 = preaustinoid A2 + succinate + CO2 + H2O. It carries out the reaction preaustinoid A2 + 2-oxoglutarate + O2 = preaustinoid A3 + succinate + CO2 + H2O. The enzyme catalyses berkeleyone A + 2-oxoglutarate + O2 = preaustinoid A + succinate + CO2 + H2O. It participates in secondary metabolite biosynthesis; terpenoid biosynthesis. Multifunctional dioxygenase; part of the gene cluster that mediates the biosynthesis of calidodehydroaustin, a fungal meroterpenoid. The first step of the pathway is the synthesis of 3,5-dimethylorsellinic acid by the polyketide synthase ausA. 3,5-dimethylorsellinic acid is then prenylated by the polyprenyl transferase ausN. Further epoxidation by the FAD-dependent monooxygenase ausM and cyclization by the probable terpene cyclase ausL lead to the formation of protoaustinoid A. Protoaustinoid A is then oxidized to spiro-lactone preaustinoid A3 by the combined action of the FAD-binding monooxygenases ausB and ausC, and the dioxygenase ausE. Acid-catalyzed keto-rearrangement and ring contraction of the tetraketide portion of preaustinoid A3 by ausJ lead to the formation of preaustinoid A4. The aldo-keto reductase ausK, with the help of ausH, is involved in the next step by transforming preaustinoid A4 into isoaustinone which is in turn hydroxylated by the P450 monooxygenase ausI to form austinolide. The cytochrome P450 monooxygenase ausG modifies austinolide to austinol. Austinol is further acetylated to austin by the O-acetyltransferase ausP, which spontaneously changes to dehydroaustin. The cytochrome P450 monooxygenase ausR then converts dehydroaustin is into 7-dehydrodehydroaustin. The hydroxylation catalyzed by ausR permits the O-acetyltransferase ausQ to add an additional acetyl group to the molecule, leading to the formation of acetoxydehydroaustin. The short chain dehydrogenase ausT catalyzes the reduction of the double bond present between carbon atoms 1 and 2 to convert 7-dehydrodehydroaustin into 1,2-dihydro-7-hydroxydehydroaustin. AusQ catalyzes not only an acetylation reaction but also the addition of the PKS ausV diketide product to 1,2-dihydro-7-hydroxydehydroaustin, forming precalidodehydroaustin. Finally, the iron/alpha-ketoglutarate-dependent dioxygenase converts precalidodehydroaustin into calidodehydroaustin. In Aspergillus calidoustus, this protein is Multifunctional dioxygenase ausE.